The chain runs to 1201 residues: Potassium channel subfamily T member 1 (1201 aa).

The disordered stretch occupies residues 1–28; the sequence is MARAKLKNSPSESNSHVKTVPPATTEDV. The Cytoplasmic segment spans residues 1 to 92; sequence MARAKLKNSP…FFIKNQRSSL (92 aa). Residues 8 to 17 show a composition bias toward polar residues; the sequence is NSPSESNSHV. A helical transmembrane segment spans residues 93 to 115; it reads RIRLFNFSLKLLTCLLYIVRVLL. Topologically, residues 116–152 are extracellular; it reads DNPEEGIGCWECEKQNYTLFNQSTKINWSHIFWVDRK. Asparagine 131 and asparagine 136 each carry an N-linked (GlcNAc...) asparagine glycan. The helical transmembrane segment at 153-175 threads the bilayer; that stretch reads LPLWAVQVSIALISFLETMLLIY. The Cytoplasmic segment spans residues 176 to 184; that stretch reads LSYKGNIWE. The chain crosses the membrane as a helical span at residues 185-206; it reads QIFRISFILEMINTVPFIITIF. Over 207–216 the chain is Extracellular; the sequence is WPPLRNLFIP. A helical membrane pass occupies residues 217-229; sequence VFLNCWLAKYALE. Topologically, residues 230-249 are cytoplasmic; sequence NMINDLHRAIQRTQSAMFNQ. Residues 250–272 traverse the membrane as a helical segment; the sequence is VLILICTLLCLVFTGTCGIQHLE. The Extracellular segment spans residues 273–279; that stretch reads RAGEKLS. The pore-forming intramembrane region spans 280 to 300; it reads LFKSFYFCIVTFSTVGYGDVT. K(+) is bound by residues valine 294 and glycine 295. The Extracellular portion of the chain corresponds to 301–304; it reads PKIW. The chain crosses the membrane as a helical span at residues 305–326; that stretch reads PSQLLVVIMICVALVVLPLQFE. Topologically, residues 327–1201 are cytoplasmic; sequence ELVYLWMERQ…NPETRDETQL (875 aa). An RCK N-terminal 1 domain is found at 350-486; that stretch reads EKHVVLCVSS…FHVKFADHVV (137 aa). Positions 511, 514, 536, and 538 each coordinate Na(+). Zn(2+) contacts are provided by cysteine 750 and cysteine 751. Arginine 753 and lysine 756 together coordinate K(+). Na(+)-binding residues include arginine 753 and lysine 756. Residues cysteine 758 and histidine 760 each coordinate Zn(2+). Residues asparagine 761, tyrosine 769, and glycine 770 each contribute to the K(+) site. Position 771 (phenylalanine 771) interacts with Na(+). The RCK N-terminal 2 domain maps to 773–913; sequence NKLIIVSAET…QFRAKDSYSL (141 aa). Residues serine 779, leucine 810, aspartate 812, glycine 834, and aspartate 857 each coordinate K(+). Residues 1175 to 1201 form a disordered region; it reads NDGHSRKSSCSNKLGPCNPETRDETQL.

It belongs to the potassium channel family. Calcium-activated (TC 1.A.1.3) subfamily. KCa4.1/KCNT1 sub-subfamily. As to quaternary structure, homotetramer; which constitutes the Na(+)-activated K(+) channel. Interacts with KCNT2; these heterodimer channels differ from the homomers in their unitary conductance, kinetic behavior, subcellular localization, and response to activation of protein kinase C. Post-translationally, phosphorylated by protein kinase C. Phosphorylation of the C-terminal domain increases channel activity.

It localises to the cell membrane. It carries out the reaction K(+)(in) = K(+)(out). Activated by high intracellular Na(+). In addition to activation by Na(+), is cooperatively activated by intracellular Cl(-) levels. Inhibited by Zn(2+). Activated upon stimulation of G-protein coupled receptors, such as CHRM1 and GRIA1. Functionally, sodium-activated K(+) channel. Acts as an important mediator of neuronal membrane excitability. Contributes to the delayed outward currents. Regulates of neuronal bursting in sensory neurons. Contributes to synaptic development and plasticity. The polypeptide is Potassium channel subfamily T member 1 (KCNT1) (Gallus gallus (Chicken)).